A 474-amino-acid chain; its full sequence is 4-aminobutyrate aminotransferase (474 aa).

The segment covering 1–13 (MSSTATVTESTHF) has biased composition (polar residues). Residues 1–31 (MSSTATVTESTHFFPNEPQGPSIKTETIPGP) form a disordered region. 142–143 (GS) provides a ligand contact to pyridoxal 5'-phosphate. R199 is a binding site for substrate. K333 is subject to N6-(pyridoxal phosphate)lysine. A pyridoxal 5'-phosphate-binding site is contributed by T357.

This sequence belongs to the class-III pyridoxal-phosphate-dependent aminotransferase family. As to quaternary structure, homodimer. It depends on pyridoxal 5'-phosphate as a cofactor.

The protein resides in the cytoplasm. It carries out the reaction 4-aminobutanoate + 2-oxoglutarate = succinate semialdehyde + L-glutamate. In terms of biological role, required for the degradation of gamma-aminobutyric acid (GABA), which is important for utilization of GABA as nitrogen source. Deaminates GABA to succinate-semialdehyde, which in turn is converted to succinate by the succinate semialdehyde dehydrogenase. Cannot transaminate beta-alanine (BAL). The chain is 4-aminobutyrate aminotransferase (uga1) from Schizosaccharomyces pombe (strain 972 / ATCC 24843) (Fission yeast).